The following is a 158-amino-acid chain: S-ribosylhomocysteine lyase (158 aa).

Residues His-54, His-58, and Cys-124 each contribute to the Fe cation site.

This sequence belongs to the LuxS family. Homodimer. Requires Fe cation as cofactor.

The catalysed reaction is S-(5-deoxy-D-ribos-5-yl)-L-homocysteine = (S)-4,5-dihydroxypentane-2,3-dione + L-homocysteine. Involved in the synthesis of autoinducer 2 (AI-2) which is secreted by bacteria and is used to communicate both the cell density and the metabolic potential of the environment. The regulation of gene expression in response to changes in cell density is called quorum sensing. Catalyzes the transformation of S-ribosylhomocysteine (RHC) to homocysteine (HC) and 4,5-dihydroxy-2,3-pentadione (DPD). This chain is S-ribosylhomocysteine lyase, found in Lactiplantibacillus plantarum (strain ATCC BAA-793 / NCIMB 8826 / WCFS1) (Lactobacillus plantarum).